Consider the following 322-residue polypeptide: Beta-ketoacyl-[acyl-carrier-protein] synthase III (322 aa).

Active-site residues include Cys113 and His249. The ACP-binding stretch occupies residues 250–254 (QANLR). Asn279 is a catalytic residue.

The protein belongs to the thiolase-like superfamily. FabH family. As to quaternary structure, homodimer.

It is found in the cytoplasm. The enzyme catalyses malonyl-[ACP] + acetyl-CoA + H(+) = 3-oxobutanoyl-[ACP] + CO2 + CoA. It functions in the pathway lipid metabolism; fatty acid biosynthesis. Its function is as follows. Catalyzes the condensation reaction of fatty acid synthesis by the addition to an acyl acceptor of two carbons from malonyl-ACP. Catalyzes the first condensation reaction which initiates fatty acid synthesis and may therefore play a role in governing the total rate of fatty acid production. Possesses both acetoacetyl-ACP synthase and acetyl transacylase activities. Its substrate specificity determines the biosynthesis of branched-chain and/or straight-chain of fatty acids. The polypeptide is Beta-ketoacyl-[acyl-carrier-protein] synthase III (Granulibacter bethesdensis (strain ATCC BAA-1260 / CGDNIH1)).